A 397-amino-acid polypeptide reads, in one-letter code: Enoyl-[acyl-carrier-protein] reductase [NADH] (397 aa).

Residues glycine 48–tyrosine 53, phenylalanine 74–glutamate 75, aspartate 111–alanine 112, and valine 139–alanine 140 contribute to the NAD(+) site. Substrate is bound at residue tyrosine 225. The Proton donor role is filled by tyrosine 235. NAD(+)-binding positions include lysine 244 and valine 273–threonine 275.

It belongs to the TER reductase family. Monomer.

It carries out the reaction a 2,3-saturated acyl-[ACP] + NAD(+) = a (2E)-enoyl-[ACP] + NADH + H(+). It functions in the pathway lipid metabolism; fatty acid biosynthesis. In terms of biological role, involved in the final reduction of the elongation cycle of fatty acid synthesis (FAS II). Catalyzes the reduction of a carbon-carbon double bond in an enoyl moiety that is covalently linked to an acyl carrier protein (ACP). This Burkholderia mallei (strain NCTC 10247) protein is Enoyl-[acyl-carrier-protein] reductase [NADH].